We begin with the raw amino-acid sequence, 41 residues long: Divisome-associated membrane protein Blr (41 aa).

The Cytoplasmic segment spans residues 1-3; that stretch reads MNR. Residues 4–24 traverse the membrane as a helical segment; sequence LIELTGWIVLVVSVILLGVAS. Residues 25-41 are Periplasmic-facing; the sequence is HIDNYQPPEQSASVQHK.

As to quaternary structure, interacts with FtsL and several other divisomal proteins, including FtsI, FtsK, FtsN, FtsQ, FtsW and YmgF. Post-translationally, the N-terminus is blocked.

The protein localises to the cell inner membrane. In terms of biological role, component of the cell division machinery, which is probably involved in the stabilization of the divisome under certain stress conditions. The sequence is that of Divisome-associated membrane protein Blr (blr) from Escherichia coli (strain K12).